Here is a 396-residue protein sequence, read N- to C-terminus: L-lactate dehydrogenase (396 aa).

An FMN hydroxy acid dehydrogenase domain is found at 1–380 (MIISAASDYR…SGDSLVQELG (380 aa)). Tyrosine 24 is a substrate binding site. FMN-binding residues include serine 106 and glutamine 127. Tyrosine 129 is a binding site for substrate. Threonine 155 contacts FMN. Arginine 164 serves as a coordination point for substrate. Lysine 251 lines the FMN pocket. Residue histidine 275 is the Proton acceptor of the active site. Arginine 278 is a binding site for substrate. FMN is bound at residue 306–330 (DSGIRNGLDVVRMIALGADTVLLGR).

It belongs to the FMN-dependent alpha-hydroxy acid dehydrogenase family. FMN is required as a cofactor.

The protein resides in the cell inner membrane. The enzyme catalyses (S)-lactate + A = pyruvate + AH2. Functionally, catalyzes the conversion of L-lactate to pyruvate. Is coupled to the respiratory chain. The chain is L-lactate dehydrogenase from Salmonella paratyphi C (strain RKS4594).